Reading from the N-terminus, the 574-residue chain is Phospholipase B-like protein A (574 aa).

An N-terminal signal peptide occupies residues 1–20; it reads MRVIRSLLLLTIAIIGSVLS. Asparagine 159, asparagine 195, and asparagine 415 each carry an N-linked (GlcNAc...) asparagine glycan.

This sequence belongs to the phospholipase B-like family.

It localises to the secreted. Functionally, phospholipase that removes both fatty-acid chains from phosphatidylcholine and produces the water-soluble glycerophosphorylcholine. In addition to phosphatidylcholine deacylation, it also hydrolyzes phosphatidylinositol and phosphatidylethanolamine. The polypeptide is Phospholipase B-like protein A (plbA) (Dictyostelium discoideum (Social amoeba)).